The chain runs to 385 residues: Trichodiene synthase (385 aa).

Belongs to the trichodiene synthase family.

It carries out the reaction (2E,6E)-farnesyl diphosphate = trichodiene + diphosphate. Its pathway is sesquiterpene biosynthesis; trichothecene biosynthesis. Functionally, TS is a member of the terpene cyclase group of enzymes. It catalyzes the isomerization and cyclization of farnesyl pyro-phosphate to form trichodiene, the first cyclic intermediate in the biosynthetic pathway for trichothecenes. It serves to branch trichothecene biosynthesis from the isoprenoid pathway. This is Trichodiene synthase (TRI5) from Paramyrothecium roridum (Myrothecium leaf spot fungus).